The sequence spans 166 residues: Thiol peroxidase (166 aa).

The 149-residue stretch at 18–166 (LKVGDKAPDV…NYEALLKVLK (149 aa)) folds into the Thioredoxin domain. Cysteine 60 serves as the catalytic Cysteine sulfenic acid (-SOH) intermediate. A disulfide bridge links cysteine 60 with cysteine 94.

Belongs to the peroxiredoxin family. Tpx subfamily. In terms of assembly, homodimer.

The enzyme catalyses a hydroperoxide + [thioredoxin]-dithiol = an alcohol + [thioredoxin]-disulfide + H2O. Functionally, thiol-specific peroxidase that catalyzes the reduction of hydrogen peroxide and organic hydroperoxides to water and alcohols, respectively. Plays a role in cell protection against oxidative stress by detoxifying peroxides. This is Thiol peroxidase from Helicobacter pylori (strain ATCC 700392 / 26695) (Campylobacter pylori).